The following is a 417-amino-acid chain: MKSIYVQVLIAIVLGVLVGAIWPQIGVALKPLGDGFIKLIKLVIAPVIFCTVAGGIARMGDMKAFGRVGVKALIYFEVVSTLALVIGLVVGRLIQPGAGFNIDPATLDASIAAGYVEKAQHGEGMVAYLLHLIPDTFIGAFADGNLLQVLVIAILTGFACVRMGDFGEKVAHVLDETSKLFFGIIHIVVRLAPIGAFGAMGFTIGKYGVEALVQLGALVATFYVTSLLFVLVVLGGIAWVSGFSIFRFLAYIREELLIVLGTSSSESVLPQMMEKLENAGARRSVVGLVIPTGYSFNLDGTNIYMTLATLFLAQATNTPLSLGQELALLGVAMLTSKGASGVTGAGFITLAATLAVVPDIPIAALAILVGVDRFMSECRALTNLVGNGVATLVVARWEGALDRQRLDRVLRGAPATE.

A run of 8 helical transmembrane segments spans residues 4-26 (IYVQ…PQIG), 41-60 (KLVI…ARMG), 72-94 (ALIY…GRLI), 137-159 (FIGA…TGFA), 180-202 (LFFG…AMGF), 217-239 (ALVA…GIAW), 285-307 (VVGL…YMTL), and 347-369 (FITL…AILV).

Belongs to the dicarboxylate/amino acid:cation symporter (DAACS) (TC 2.A.23) family.

It localises to the cell inner membrane. Its function is as follows. Responsible for the transport of dicarboxylates such as succinate, fumarate, and malate from the periplasm across the membrane. The chain is C4-dicarboxylate transport protein from Caulobacter vibrioides (strain ATCC 19089 / CIP 103742 / CB 15) (Caulobacter crescentus).